We begin with the raw amino-acid sequence, 294 residues long: Glyceraldehyde-3-phosphate dehydrogenase (294 aa).

NAD(+) contacts are provided by Asp19, Lys63, and Thr105. Residues 134–136 and Thr165 contribute to the D-glyceraldehyde 3-phosphate site; that span reads SCT. Cys135 functions as the Nucleophile in the catalytic mechanism. The tract at residues 169–188 is disordered; sequence KTVDGPSHKDWRGGRGASQN. D-glyceraldehyde 3-phosphate contacts are provided by residues 194–195 and Arg217; that span reads TG.

Belongs to the glyceraldehyde-3-phosphate dehydrogenase family. As to quaternary structure, homotetramer.

The protein resides in the cytoplasm. It carries out the reaction D-glyceraldehyde 3-phosphate + phosphate + NAD(+) = (2R)-3-phospho-glyceroyl phosphate + NADH + H(+). It participates in carbohydrate degradation; glycolysis; pyruvate from D-glyceraldehyde 3-phosphate: step 1/5. Functionally, catalyzes the oxidative phosphorylation of glyceraldehyde 3-phosphate (G3P) to 1,3-bisphosphoglycerate (BPG) using the cofactor NAD. The first reaction step involves the formation of a hemiacetal intermediate between G3P and a cysteine residue, and this hemiacetal intermediate is then oxidized to a thioester, with concomitant reduction of NAD to NADH. The reduced NADH is then exchanged with the second NAD, and the thioester is attacked by a nucleophilic inorganic phosphate to produce BPG. In Serratia marcescens, this protein is Glyceraldehyde-3-phosphate dehydrogenase (gap).